The primary structure comprises 306 residues: N-acetylmuramic acid 6-phosphate etherase (306 aa).

The SIS domain maps to Thr-59–Lys-222. Residue Glu-87 is the Proton donor of the active site. Glu-118 is an active-site residue.

It belongs to the GCKR-like family. MurNAc-6-P etherase subfamily. In terms of assembly, homodimer.

The catalysed reaction is N-acetyl-D-muramate 6-phosphate + H2O = N-acetyl-D-glucosamine 6-phosphate + (R)-lactate. It participates in amino-sugar metabolism; N-acetylmuramate degradation. Its function is as follows. Specifically catalyzes the cleavage of the D-lactyl ether substituent of MurNAc 6-phosphate, producing GlcNAc 6-phosphate and D-lactate. This Microcystis aeruginosa (strain NIES-843 / IAM M-2473) protein is N-acetylmuramic acid 6-phosphate etherase.